Here is a 280-residue protein sequence, read N- to C-terminus: F420-dependent methylenetetrahydromethanopterin dehydrogenase (280 aa).

Belongs to the MTD family.

It catalyses the reaction 5,10-methylenetetrahydromethanopterin + oxidized coenzyme F420-(gamma-L-Glu)(n) + 2 H(+) = 5,10-methenyl-5,6,7,8-tetrahydromethanopterin + reduced coenzyme F420-(gamma-L-Glu)(n). It participates in one-carbon metabolism; methanogenesis from CO(2); 5,10-methylene-5,6,7,8-tetrahydromethanopterin from 5,10-methenyl-5,6,7,8-tetrahydromethanopterin (coenzyme F420 route): step 1/1. Functionally, catalyzes the reversible reduction of methenyl-H(4)MPT(+) to methylene-H(4)MPT. The chain is F420-dependent methylenetetrahydromethanopterin dehydrogenase from Methanosphaerula palustris (strain ATCC BAA-1556 / DSM 19958 / E1-9c).